We begin with the raw amino-acid sequence, 333 residues long: Nucleoid-associated protein APL_0429 (333 aa).

Belongs to the YejK family.

Its subcellular location is the cytoplasm. The protein localises to the nucleoid. This Actinobacillus pleuropneumoniae serotype 5b (strain L20) protein is Nucleoid-associated protein APL_0429.